Here is a 279-residue protein sequence, read N- to C-terminus: Thymidylate synthase (279 aa).

Position 141–142 (141–142 (RR)) interacts with dUMP. Cys161 acts as the Nucleophile in catalysis. Residues 181-184 (RSND), Asn192, and 222-224 (HVY) each bind dUMP. Position 184 (Asp184) interacts with (6R)-5,10-methylene-5,6,7,8-tetrahydrofolate. A (6R)-5,10-methylene-5,6,7,8-tetrahydrofolate-binding site is contributed by Ala278.

Belongs to the thymidylate synthase family. Homodimer.

It carries out the reaction dUMP + (6R)-5,10-methylene-5,6,7,8-tetrahydrofolate = 7,8-dihydrofolate + dTMP. It functions in the pathway pyrimidine metabolism; dTTP biosynthesis. Its function is as follows. Provides the sole de novo source of dTMP for DNA biosynthesis. The sequence is that of Thymidylate synthase (thyP3) from Bacillus subtilis (Bacteriophage phi-3T).